The primary structure comprises 163 residues: UPF0262 protein RPA4530 (163 aa).

The protein belongs to the UPF0262 family.

The polypeptide is UPF0262 protein RPA4530 (Rhodopseudomonas palustris (strain ATCC BAA-98 / CGA009)).